The chain runs to 299 residues: MTGLRQIAFYGKGGIGKSTTSQNTLAALVEKGQKILIVGCDPKADSTRLILNAKAQDTVLSLAAEAGSVEDLELEEVLKIGYKGIKCVESGGPEPGVGCAGRGVITSINFLEENGAYDDVDYVSYDVLGDVVCGGFAMPIRENKAQEIYIVMSGEMMALYAANNIAKGILKYAHSGGVRLGGLICNERQTDRELDLAEALAKRLNSQLIHFVPRDNIVQHAELRRQTVIQYAPDSAQAGEYRKLAEKVHANAGKGTIPTPITMEELEQMLLDFGIMKTEEQQLAELAAKEAAKAAAALR.

Residue 11 to 18 (GKGGIGKS) participates in ATP binding. Cys99 serves as a coordination point for [4Fe-4S] cluster. Arg102 bears the ADP-ribosylarginine; by dinitrogenase reductase ADP-ribosyltransferase mark. [4Fe-4S] cluster is bound at residue Cys133.

It belongs to the NifH/BchL/ChlL family. In terms of assembly, homodimer. It depends on [4Fe-4S] cluster as a cofactor. Post-translationally, the reversible ADP-ribosylation of Arg-102 inactivates the nitrogenase reductase and regulates nitrogenase activity.

It carries out the reaction N2 + 8 reduced [2Fe-2S]-[ferredoxin] + 16 ATP + 16 H2O = H2 + 8 oxidized [2Fe-2S]-[ferredoxin] + 2 NH4(+) + 16 ADP + 16 phosphate + 6 H(+). The key enzymatic reactions in nitrogen fixation are catalyzed by the nitrogenase complex, which has 2 components: the iron protein and the molybdenum-iron protein. This is Nitrogenase iron protein from Methylobacterium nodulans (strain LMG 21967 / CNCM I-2342 / ORS 2060).